The chain runs to 253 residues: Homeobox protein EMX2 (253 aa).

The segment at residues 155-214 (PKRIRTAFSPSQLLRLEHAFEKNHYVVGAERKQLAHSLSLTETQVKVWFQNRRTKFKRQK) is a DNA-binding region (homeobox). Residues 213–253 (QKLEEEGSDSQQKKKGTHHINRWRIATKQASPEEIDVTSDD) are disordered. Residues 225–234 (KKKGTHHINR) are compositionally biased toward basic residues.

It belongs to the EMX homeobox family. In terms of assembly, interacts with translation initiation factor EIF4E.

Its subcellular location is the nucleus. It localises to the cell projection. The protein localises to the axon. Functionally, transcription factor, which in cooperation with EMX1, acts to generate the boundary between the roof and archipallium in the developing brain. May function in combination with OTX1/2 to specify cell fates in the developing central nervous system. In the inner ear, it controls the distribution of GPR156 at hair cell boundaries, and regulates the organization of stereociliary bundles in opposite orientations across the line of polarity reversal (LPR). The polypeptide is Homeobox protein EMX2 (EMX2) (Bos taurus (Bovine)).